The chain runs to 303 residues: Formylglycine-generating enzyme (303 aa).

Asn188, Ile189, Asp202, Tyr204, Asn222, Val223, Gly225, and Val227 together coordinate Ca(2+). Positions 269 and 274 each coordinate Cu(+).

This sequence belongs to the sulfatase-modifying factor family. Requires Cu(+) as cofactor.

It catalyses the reaction L-cysteinyl-[sulfatase] + 2 a thiol + O2 = an organic disulfide + 3-oxo-L-alanyl-[sulfatase] + hydrogen sulfide + H2O + H(+). It participates in protein modification; sulfatase oxidation. Functionally, oxidase that catalyzes the conversion of cysteine to 3-oxoalanine on target proteins. 3-oxoalanine modification, which is also named formylglycine (fGly), occurs in the maturation of arylsulfatases and some alkaline phosphatases that use the hydrated form of 3-oxoalanine as a catalytic nucleophile. In Thermomonospora curvata (strain ATCC 19995 / DSM 43183 / JCM 3096 / KCTC 9072 / NBRC 15933 / NCIMB 10081 / Henssen B9), this protein is Formylglycine-generating enzyme.